The following is a 383-amino-acid chain: Guanine nucleotide-binding protein G(s) subunit alpha (383 aa).

The interval 1-31 is disordered; that stretch reads MGCFGSAGSKQSDSNSSEDTKSQKRRSDAIT. G2 carries the N-palmitoyl glycine lipid modification. Residue C3 is the site of S-palmitoyl cysteine attachment. Residues 8-17 are compositionally biased toward polar residues; it reads GSKQSDSNSS. Over residues 18–31 the composition is skewed to basic and acidic residues; it reads EDTKSQKRRSDAIT. One can recognise a G-alpha domain in the interval 43–383; sequence ATHRLLLLGA…RMHLRQYELL (341 aa). A G1 motif region spans residues 46–59; that stretch reads RLLLLGAGESGKST. Residues 51–58, 187–193, 212–216, 281–284, and A355 each bind GTP; these read GAGESGKS, LRCRVLT, DVGGQ, and NKQD. Mg(2+) contacts are provided by S58 and T193. The segment at 185 to 193 is G2 motif; the sequence is DILRCRVLT. Positions 208-217 are G3 motif; that stretch reads FHMFDVGGQR. Positions 277–284 are G4 motif; that stretch reads ILFLNKQD. The interval 353–358 is G5 motif; sequence TCAVDT.

It belongs to the G-alpha family. G(s) subfamily. In terms of assembly, g proteins are composed of 3 units; alpha, beta and gamma. The alpha chain contains the guanine nucleotide binding site.

Functionally, guanine nucleotide-binding proteins (G proteins) are involved as modulators or transducers in various transmembrane signaling systems. The G(s) protein is involved in hormonal regulation of adenylate cyclase: it activates the cyclase. Participates in olfactory signal transduction. This Anopheles gambiae (African malaria mosquito) protein is Guanine nucleotide-binding protein G(s) subunit alpha.